Consider the following 368-residue polypeptide: MVTGWHRPTWIEIDRAAIRENIKNEQNKLPESVDLWAVVKANAYGHGIIEVARTAKEAGAKGFCVAILDEALALREAGFQDDFILVLGATRKEDANLAAKNHISLTVFREDWLENLTLEATLRIHLKVDSGMGRLGIRTTEEARRIEATSTNDHQLQLEGIYTHFATADQLETSYFEQQLAKFQTILTSLKNRPTYVHTANSAASLLQPQIGFDAIRFGISMYGLTPSTEIKTSLPFELKPALALYTEMVHVKELAPGDSVSYGATYTATEREWVATLPIGYADGLIRHYSGFHVLVGGELAPIIGRVCMDQTIIKLPREFQTGSKVTIIGKDHGNTITADDAAQYLDTINYEVTCLLNERIPRKYIH.

Lys-40 acts as the Proton acceptor; specific for D-alanine in catalysis. Lys-40 is modified (N6-(pyridoxal phosphate)lysine). Arg-134 is a binding site for substrate. The active-site Proton acceptor; specific for L-alanine is the Tyr-263. Met-310 lines the substrate pocket.

The protein belongs to the alanine racemase family. Requires pyridoxal 5'-phosphate as cofactor.

The enzyme catalyses L-alanine = D-alanine. It functions in the pathway amino-acid biosynthesis; D-alanine biosynthesis; D-alanine from L-alanine: step 1/1. Its function is as follows. Catalyzes the interconversion of L-alanine and D-alanine. May also act on other amino acids. This Listeria monocytogenes serovar 1/2a (strain ATCC BAA-679 / EGD-e) protein is Alanine racemase (alr).